A 912-amino-acid chain; its full sequence is Coiled-coil domain-containing protein 162 (912 aa).

Coiled coils occupy residues 1–35 (MFKS…FSFA) and 220–276 (VLLG…VVMS).

The protein is Coiled-coil domain-containing protein 162 of Mus musculus (Mouse).